We begin with the raw amino-acid sequence, 394 residues long: Elongation factor Tu (394 aa).

Residues 10-204 (KPHVNIGTIG…AVDSYIPQPV (195 aa)) enclose the tr-type G domain. The tract at residues 19-26 (GHVDHGKT) is G1. 19–26 (GHVDHGKT) is a binding site for GTP. Thr-26 lines the Mg(2+) pocket. Residues 60 to 64 (GITIS) are G2. The tract at residues 81 to 84 (DCPG) is G3. GTP is bound by residues 81–85 (DCPGH) and 136–139 (NKVD). A G4 region spans residues 136–139 (NKVD). Residues 174–176 (SAL) form a G5 region.

Belongs to the TRAFAC class translation factor GTPase superfamily. Classic translation factor GTPase family. EF-Tu/EF-1A subfamily. Monomer.

Its subcellular location is the cytoplasm. It catalyses the reaction GTP + H2O = GDP + phosphate + H(+). Functionally, GTP hydrolase that promotes the GTP-dependent binding of aminoacyl-tRNA to the A-site of ribosomes during protein biosynthesis. This chain is Elongation factor Tu, found in Rickettsia canadensis (strain McKiel).